The sequence spans 260 residues: Putative [LysW]-aminoadipate/[LysW]-glutamate kinase (260 aa).

Substrate contacts are provided by residues 35 to 36 (GG), R62, and N162.

The protein belongs to the acetylglutamate kinase family. LysZ subfamily.

Its subcellular location is the cytoplasm. The enzyme catalyses [amino-group carrier protein]-C-terminal-N-(1,4-dicarboxybutan-1-yl)-L-glutamine + ATP = [amino-group carrier protein]-C-terminal-N-(1-carboxy-5-phosphooxy-5-oxopentan-1-yl)-L-glutamine + ADP. It catalyses the reaction [amino-group carrier protein]-C-terminal-gamma-(L-glutamyl)-L-glutamate + ATP = [amino-group carrier protein]-C-terminal-gamma-(5-phospho-L-glutamyl)-L-glutamate + ADP. It participates in amino-acid biosynthesis; L-lysine biosynthesis via AAA pathway; L-lysine from L-alpha-aminoadipate (Thermus route): step 2/5. The protein operates within amino-acid biosynthesis; L-arginine biosynthesis. Functionally, involved in both the arginine and lysine biosynthetic pathways. Phosphorylates the LysW-bound precursors glutamate (for arginine biosynthesis), respectively alpha-aminoadipate (for lysine biosynthesis). The protein is Putative [LysW]-aminoadipate/[LysW]-glutamate kinase of Pyrobaculum neutrophilum (strain DSM 2338 / JCM 9278 / NBRC 100436 / V24Sta) (Thermoproteus neutrophilus).